Reading from the N-terminus, the 469-residue chain is Cytochrome c biogenesis protein CcsB (469 aa).

A run of 3 helical transmembrane segments spans residues 30 to 50 (LRLAIGLLLAIAVLSATGTVI), 89 to 109 (TPWFLAILILFGSSLAACSLT), and 175 to 195 (IGPILVHVSMLLILLGAIWGS).

The protein belongs to the Ccs1/CcsB family. As to quaternary structure, may interact with CcsA.

The protein localises to the cellular thylakoid membrane. In terms of biological role, required during biogenesis of c-type cytochromes (cytochrome c6 and cytochrome f) at the step of heme attachment. The chain is Cytochrome c biogenesis protein CcsB from Synechococcus sp. (strain JA-2-3B'a(2-13)) (Cyanobacteria bacterium Yellowstone B-Prime).